The primary structure comprises 294 residues: MEIGLREWLILIGIIVIAGILFDGWRRMRGGKGKLKFRLDRSYANAPDDEGGAEVLGPSRVLETHKEPELDESDLPSVSAPARERERDPKPAKASKRGKRNHSEPQQGDLNLAAEAREPDLFADDKDDFVADNNRHGAAATPSTPVKELPPAEEVLVISVISRDEGGFKGPALLQNILESGLRFGEMDIFHRHESMAGHGEVLFSMANAVKPGVFDLDDIDHFSTRAVSFFLGLPGPRHPKQAFDVMVAAARKLAHELDGELKDDQRSVLTAQTIEHYRQRIVEFERRALTQKR.

Met1 is a topological domain (periplasmic). Residues 2–22 (EIGLREWLILIGIIVIAGILF) traverse the membrane as a helical segment. At 23–294 (DGWRRMRGGK…FERRALTQKR (272 aa)) the chain is on the cytoplasmic side. Disordered stretches follow at residues 64–111 (THKE…GDLN) and 126–146 (KDDF…STPV). Residues 82–91 (ARERERDPKP) are compositionally biased toward basic and acidic residues.

The protein belongs to the ZipA family. As to quaternary structure, interacts with FtsZ via their C-terminal domains.

It localises to the cell inner membrane. Functionally, essential cell division protein that stabilizes the FtsZ protofilaments by cross-linking them and that serves as a cytoplasmic membrane anchor for the Z ring. Also required for the recruitment to the septal ring of downstream cell division proteins. This Pseudomonas entomophila (strain L48) protein is Cell division protein ZipA.